A 219-amino-acid polypeptide reads, in one-letter code: uncharacterized protein (219 aa).

The signal sequence occupies residues M1–S17. C18 is lipidated: N-palmitoyl cysteine. C18 is lipidated: S-diacylglycerol cysteine. The tract at residues K110–S136 is disordered. A compositionally biased stretch (polar residues) spans E112–K126. Residues Y137–C165 are a coiled coil.

It is found in the cell membrane. This is an uncharacterized protein from Rickettsia prowazekii (strain Madrid E).